A 273-amino-acid polypeptide reads, in one-letter code: Proteasome subunit beta type-5-B (273 aa).

A propeptide spans 1–57 (MKLDTSGLETTMPVIGFGSNSEMLDGFSSAPSFDLPRTTDFDGFQKKAVEMVKPAKG) (removed in mature form). Catalysis depends on Thr-58, which acts as the Nucleophile.

The protein belongs to the peptidase T1B family. As to quaternary structure, component of the 20S core complex of the 26S proteasome. The 26S proteasome is composed of a core protease (CP), known as the 20S proteasome, capped at one or both ends by the 19S regulatory particle (RP/PA700). The 20S proteasome core is composed of 28 subunits that are arranged in four stacked rings, resulting in a barrel-shaped structure. The two end rings are each formed by seven alpha subunits, and the two central rings are each formed by seven beta subunits. The catalytic chamber with the active sites is on the inside of the barrel.

It is found in the cytoplasm. It localises to the nucleus. The catalysed reaction is Cleavage of peptide bonds with very broad specificity.. Its function is as follows. The proteasome is a multicatalytic proteinase complex which is characterized by its ability to cleave peptides with Arg, Phe, Tyr, Leu, and Glu adjacent to the leaving group at neutral or slightly basic pH. The proteasome has an ATP-dependent proteolytic activity. The protein is Proteasome subunit beta type-5-B (PBE2) of Arabidopsis thaliana (Mouse-ear cress).